A 2135-amino-acid polypeptide reads, in one-letter code: Protein SUBSTANDARD STARCH GRAIN 4, chloroplastic (2135 aa).

Low complexity-rich tracts occupy residues 1–10 (MSHCLRASPF) and 72–84 (QHQPLLPTRRQQQ). A chloroplast-targeting transit peptide spans 1–42 (MSHCLRASPFLSPPPPLLHPSRRRRHRQGGCIHTSPGTRPLV). 2 disordered regions span residues 1–44 (MSHC…LVAR) and 58–89 (SDSSDCPAPHHPHSQHQPLLPTRRQQQQPPPP). Residues 43–104 (ARARFDPPPL…ASLAPLWREG (62 aa)) lie on the Stromal side of the membrane. Residues 105–125 (LFLVRCSVFAAALSVAAALSW) traverse the membrane as a helical segment. The Chloroplast intermembrane segment spans residues 126–2135 (YAQLRARSFV…LFEYSATSQG (2010 aa)). Residues 361–370 (RRRYRRKAHS) show a composition bias toward basic residues. Disordered regions lie at residues 361-382 (RRRYRRKAHSKLISDTDNSSQQ), 401-492 (SGNP…QVSE), and 1843-1869 (FLGSLSTSPDGQQSETERTPEHGSFKP). Polar residues-rich tracts occupy residues 373 to 382 (ISDTDNSSQQ), 454 to 490 (NFASTMLIGNTDVLNGSSHNQQPSQISSHSWENNEQV), and 1846 to 1856 (SLSTSPDGQQS). Positions 1857 to 1866 (ETERTPEHGS) are enriched in basic and acidic residues.

Belongs to the TamB family. In terms of assembly, part of the TIC complex, which can interact with components of the TOC complex to form a larger import complex. Highly expressed in third leaf and developing seeds. Expressed in anthers, pistils, flag leaves and young panicles.

Its subcellular location is the plastid. It localises to the chloroplast inner membrane. It is found in the chloroplast intermembrane space. The protein resides in the chloroplast. The protein localises to the amyloplast. Functionally, part of the inner chloroplast membrane translocon complex (TIC) which associates with the outer chloroplast membrane translocon complex (TOC) and forms a supercomplex involved in protein precursor import into the chloroplast stroma. Required for the regulation of starch granule size in amyloplasts. The chain is Protein SUBSTANDARD STARCH GRAIN 4, chloroplastic from Oryza sativa subsp. japonica (Rice).